Reading from the N-terminus, the 61-residue chain is Small ribosomal subunit protein bS21 (61 aa).

This sequence belongs to the bacterial ribosomal protein bS21 family.

This is Small ribosomal subunit protein bS21 from Methylacidiphilum infernorum (isolate V4) (Methylokorus infernorum (strain V4)).